The sequence spans 350 residues: 8-amino-7-oxononanoate synthase (350 aa).

77-78 (GY) is a binding site for pyridoxal 5'-phosphate. Position 102 (histidine 102) interacts with substrate. Residues serine 150, 175–178 (DDAH), and 204–207 (TLSK) contribute to the pyridoxal 5'-phosphate site. At lysine 207 the chain carries N6-(pyridoxal phosphate)lysine. Threonine 316 is a binding site for substrate.

It belongs to the class-II pyridoxal-phosphate-dependent aminotransferase family. BioF subfamily. As to quaternary structure, homodimer. The cofactor is pyridoxal 5'-phosphate.

It carries out the reaction 6-carboxyhexanoyl-[ACP] + L-alanine + H(+) = (8S)-8-amino-7-oxononanoate + holo-[ACP] + CO2. Its pathway is cofactor biosynthesis; biotin biosynthesis. Catalyzes the decarboxylative condensation of pimeloyl-[acyl-carrier protein] and L-alanine to produce 8-amino-7-oxononanoate (AON), [acyl-carrier protein], and carbon dioxide. The chain is 8-amino-7-oxononanoate synthase from Methylocella silvestris (strain DSM 15510 / CIP 108128 / LMG 27833 / NCIMB 13906 / BL2).